We begin with the raw amino-acid sequence, 496 residues long: Galactose-1-phosphate uridylyltransferase (496 aa).

Belongs to the galactose-1-phosphate uridylyltransferase type 2 family.

It is found in the cytoplasm. The catalysed reaction is alpha-D-galactose 1-phosphate + UDP-alpha-D-glucose = alpha-D-glucose 1-phosphate + UDP-alpha-D-galactose. Its pathway is carbohydrate metabolism; galactose metabolism. This chain is Galactose-1-phosphate uridylyltransferase, found in Staphylococcus saprophyticus subsp. saprophyticus (strain ATCC 15305 / DSM 20229 / NCIMB 8711 / NCTC 7292 / S-41).